The sequence spans 296 residues: Protein-export membrane protein SecF (296 aa).

6 consecutive transmembrane segments (helical) span residues 23–43 (MIIY…ANYV), 144–164 (AIVY…RVPV), 169–189 (VVFS…IFGI), 194–214 (ATIA…ILLT), 236–256 (GFTM…FSTA), and 265–285 (VLIF…AGVL).

It belongs to the SecD/SecF family. SecF subfamily. Part of the protein translocation apparatus. Forms a complex with SecD.

The protein resides in the cell membrane. Its function is as follows. Involved in protein export. This Pyrococcus furiosus (strain ATCC 43587 / DSM 3638 / JCM 8422 / Vc1) protein is Protein-export membrane protein SecF.